A 216-amino-acid polypeptide reads, in one-letter code: Octanoyltransferase (216 aa).

In terms of domain architecture, BPL/LPL catalytic spans 32-207 (SDSQDELWIV…TFSQIMGYQQ (176 aa)). Residues 71-78 (RGGQVTYH), 138-140 (SLG), and 151-153 (GLA) each bind substrate. The active-site Acyl-thioester intermediate is the C169.

Belongs to the LipB family.

The protein localises to the cytoplasm. It catalyses the reaction octanoyl-[ACP] + L-lysyl-[protein] = N(6)-octanoyl-L-lysyl-[protein] + holo-[ACP] + H(+). Its pathway is protein modification; protein lipoylation via endogenous pathway; protein N(6)-(lipoyl)lysine from octanoyl-[acyl-carrier-protein]: step 1/2. Functionally, catalyzes the transfer of endogenously produced octanoic acid from octanoyl-acyl-carrier-protein onto the lipoyl domains of lipoate-dependent enzymes. Lipoyl-ACP can also act as a substrate although octanoyl-ACP is likely to be the physiological substrate. The chain is Octanoyltransferase from Shewanella frigidimarina (strain NCIMB 400).